A 528-amino-acid chain; its full sequence is Peptide chain release factor 3 (528 aa).

Positions 10 to 278 (DRRRTFGIIS…AFVEQAPVPR (269 aa)) constitute a tr-type G domain. Residues 19–26 (SHPDAGKT), 87–91 (DTPGH), and 141–144 (NKLD) contribute to the GTP site.

The protein belongs to the TRAFAC class translation factor GTPase superfamily. Classic translation factor GTPase family. PrfC subfamily.

The protein localises to the cytoplasm. Increases the formation of ribosomal termination complexes and stimulates activities of RF-1 and RF-2. It binds guanine nucleotides and has strong preference for UGA stop codons. It may interact directly with the ribosome. The stimulation of RF-1 and RF-2 is significantly reduced by GTP and GDP, but not by GMP. The sequence is that of Peptide chain release factor 3 from Syntrophotalea carbinolica (strain DSM 2380 / NBRC 103641 / GraBd1) (Pelobacter carbinolicus).